The following is an 841-amino-acid chain: MIPRIRLAVATIPAMAFLSCLRSESWDPCVQVVPNISYQCMELNFYKIPDNIPTSVKILDLSFNYLSHLDSNSFSSFPELQVLDLSRCEIQTIDDDAYQGLNYLSTLILTGNPIQSLALGAFSGLPSLQKLVAVETNLASLEDFPIGHLKTLNELNVAHNHIHSFKLPEYFSNLPNLEHLDLSKNKIENIYHEHLQVLHQVPLHNLSLDLSLNPLNFIEPGAFNKIRLNGLTLRSNFNSSDVMKTCIQGLAGSKVNQLVLGEFKNERNLESFDKSVLEELCNLTLEQFRIAHFGEFPDDVSDLFNCLANASVISLLSLNLHGLEALPNDFRWQHLEVVNCKLQQFPALKFNSLKKFVFKDNKHMHTFTEINLPNLQFLDLSGNHLSFKGCCSHNEFGTTKLKHLDLSFNEIITMKSNFMGLEQLEYLDFQHSSLKQANDFSIFLSLRNLHYLDISYTNIHVVFRGIFAGLVSLQTLKMAGNSFQNNLLPDVFTDLTNLILLDLSKCQLEQVSQRAFHSLPRLQVLNMSHNRLLFLDTLPYKPLHSLRILDCSYNLIVASKEQELQHLPRSLAFLNLTKNDFSCACEHQTFLQWVKDQKQLLVGAEQMVCTQPLEMQDLPVLSFRNATCQISEAVISASVLTFLLVSVAGILVYKFYFHLLLFVGCKKYGRGESTYDAFVIYSSQDEDWVRNELVKNLEEGVPPFHLCLHYRDFIPGVAIAANIIQEGFHKSRKVIVVVSQHFIQSRWCIFEYEIAQTWQFLRSHAGIIFIVLQKLEKSLLRQQVELYRLLSRNTYLEWEDSVLGRHIFWRRLKKALLDGKPWSPEGTEDSESNQHDTTAFT.

A signal peptide spans 1–23 (MIPRIRLAVATIPAMAFLSCLRS). The Extracellular portion of the chain corresponds to 24–632 (ESWDPCVQVV…FRNATCQISE (609 aa)). A disulfide bond links Cys29 and Cys40. Asn35 carries an N-linked (GlcNAc...) asparagine glycan. LRR repeat units follow at residues 55-76 (SVKI…SFSS), 79-100 (ELQV…AYQG), 103-124 (YLST…AFSG), 127-148 (SLQK…PIGH), 151-172 (TLNE…EYFS), 176-197 (NLEH…HLQV), and 205-225 (NLSL…AFNK). N-linked (GlcNAc...) asparagine glycosylation is found at Asn205, Asn238, Asn282, and Asn309. The cysteines at positions 281 and 306 are disulfide-linked. LRR repeat units lie at residues 374–395 (NLQF…SHNE), 400–422 (KLKH…MGLE), 423–444 (QLEY…SIFL), 448–469 (NLHY…IFAG), 472–495 (SLQT…FTDL), 497–518 (NLIL…AFHS), 521–542 (RLQV…PYKP), and 545–568 (SLRI…QHLP). Cysteines 390 and 391 form a disulfide. Residue Asn526 is glycosylated (N-linked (GlcNAc...) asparagine). The N-linked (GlcNAc...) asparagine glycan is linked to Asn575. In terms of domain architecture, LRRCT spans 579-630 (NDFSCACEHQTFLQWVKDQKQLLVGAEQMVCTQPLEMQDLPVLSFRNATCQI). 2 disulfide bridges follow: Cys583–Cys609 and Cys585–Cys628. N-linked (GlcNAc...) asparagine glycosylation is present at Asn625. A helical membrane pass occupies residues 633-653 (AVISASVLTFLLVSVAGILVY). At 654–841 (KFYFHLLLFV…SNQHDTTAFT (188 aa)) the chain is on the cytoplasmic side. Residues 673 to 816 (STYDAFVIYS…IFWRRLKKAL (144 aa)) enclose the TIR domain.

The protein belongs to the Toll-like receptor family. As to quaternary structure, belongs to the lipopolysaccharide (LPS) receptor, a multi-protein complex containing at least CD14, LY96 and TLR4. Binding to bacterial LPS leads to homodimerization. Interacts with LY96 via the extracellular domain. Interacts with MYD88 and TIRAP via their respective TIR domains. Interacts with NOX4. Interacts with CNPY3 and HSP90B1; this interaction is required for proper folding in the endoplasmic reticulum. Interacts with MAP3K21; this interaction leads to negative regulation of TLR4 signaling. Interacts with CD36, following CD36 stimulation by oxLDL or amyloid-beta 42, and forms a heterodimer with TLR6. The trimeric complex is internalized and triggers inflammatory response. LYN kinase activity facilitates TLR4-TLR6 heterodimerization and signal initiation. Interacts with TICAM1 in response to LPS in a WDFY1-dependent manner. Interacts with WDFY1 in response to LPS. Interacts with SMPDL3B. Interacts with CEACAM1; upon lipopolysaccharide stimulation, forms a complex including TLR4 and the phosphorylated form of SYK and CEACAM1, which in turn, recruits PTPN6 that dephosphorylates SYK, reducing the production of reactive oxygen species (ROS) and lysosome disruption, which in turn, reduces the activity of the inflammasome. Interacts with RFTN1; the interaction occurs in response to lipopolysaccharide stimulation. Interacts with SCIMP; the interaction occurs in response to lipopolysaccharide stimulation and is enhanced by phosphorylation of SCIMP by LYN. This interaction facilitates the phosphorylation of TLR4 by LYN which elicits a selective cytokine response in macrophages. Interacts with TRAF3IP3. Interacts with TREM1; this interaction enhances TLR4-mediated inflammatory response. Interacts with ZG16B/PAUF. Interacts with CD82; this interaction inhibits TLR4-mediated signaling pathway. In terms of processing, phosphorylated on tyrosine residues by LYN after binding lipopolysaccharide. Ubiquitinated by RNF128 via 'Lys-28'-linked polyubiquitin chains, leading to proteasomal degradation.

The protein localises to the cell membrane. The protein resides in the early endosome. It is found in the cell projection. Its subcellular location is the ruffle. Functionally, transmembrane receptor that functions as a pattern recognition receptor recognizing pathogen- and damage-associated molecular patterns (PAMPs and DAMPs) to induce innate immune responses via downstream signaling pathways. At the plasma membrane, cooperates with LY96 to mediate the innate immune response to bacterial lipopolysaccharide (LPS). Also involved in LPS-independent inflammatory responses triggered by free fatty acids, such as palmitate, and Ni(2+). Mechanistically, acts via MYD88, TIRAP and TRAF6, leading to NF-kappa-B activation, cytokine secretion and the inflammatory response. Alternatively, CD14-mediated TLR4 internalization via endocytosis is associated with the initiation of a MYD88-independent signaling via the TICAM1-TBK1-IRF3 axis leading to type I interferon production. In addition to the secretion of proinflammatory cytokines, initiates the activation of NLRP3 inflammasome and formation of a positive feedback loop between autophagy and NF-kappa-B signaling cascade. In complex with TLR6, promotes inflammation in monocytes/macrophages by associating with TLR6 and the receptor CD86. Upon ligand binding, such as oxLDL or amyloid-beta 42, the TLR4:TLR6 complex is internalized and triggers inflammatory response, leading to NF-kappa-B-dependent production of CXCL1, CXCL2 and CCL9 cytokines, via MYD88 signaling pathway, and CCL5 cytokine, via TICAM1 signaling pathway. In myeloid dendritic cells, vesicular stomatitis virus glycoprotein G but not LPS promotes the activation of IRF7, leading to type I IFN production in a CD14-dependent manner. The protein is Toll-like receptor 4 (TLR4) of Sus scrofa (Pig).